Reading from the N-terminus, the 414-residue chain is Putative dipeptidase ARB_02715 (414 aa).

The signal sequence occupies residues 1 to 20 (MAALFVSLLALTSLVPVQGA). Positions 45, 47, and 157 each coordinate Zn(2+). An intrachain disulfide couples Cys-96 to Cys-186. His-184 lines the substrate pocket. Positions 228 and 249 each coordinate Zn(2+). Arg-260 and Asp-320 together coordinate substrate. Asn-392 carries N-linked (GlcNAc...) asparagine glycosylation.

This sequence belongs to the metallo-dependent hydrolases superfamily. Peptidase M19 family. Zn(2+) serves as cofactor.

The catalysed reaction is an L-aminoacyl-L-amino acid + H2O = 2 an L-alpha-amino acid. In terms of biological role, hydrolyzes a wide range of dipeptides. This is Putative dipeptidase ARB_02715 from Arthroderma benhamiae (strain ATCC MYA-4681 / CBS 112371) (Trichophyton mentagrophytes).